We begin with the raw amino-acid sequence, 466 residues long: Chromosomal replication initiator protein DnaA (466 aa).

A domain I, interacts with DnaA modulators region spans residues 1 to 86 (MSLSLWQQCL…EVGTKPVTQT (86 aa)). Residues 86–129 (TLKTPVHNVVAPTQTTTAQPQRVAPAARSGWDNVPAPAEPTYRS) form a domain II region. The segment at 130-346 (NVNVKHTFDN…GALNRVIANA (217 aa)) is domain III, AAA+ region. ATP-binding residues include Gly174, Gly176, Lys177, and Thr178. Positions 347–466 (NFTGRAITID…FSNLIRTLSS (120 aa)) are domain IV, binds dsDNA.

The protein belongs to the DnaA family. Oligomerizes as a right-handed, spiral filament on DNA at oriC.

It localises to the cytoplasm. Its function is as follows. Plays an essential role in the initiation and regulation of chromosomal replication. ATP-DnaA binds to the origin of replication (oriC) to initiate formation of the DNA replication initiation complex once per cell cycle. Binds the DnaA box (a 9 base pair repeat at the origin) and separates the double-stranded (ds)DNA. Forms a right-handed helical filament on oriC DNA; dsDNA binds to the exterior of the filament while single-stranded (ss)DNA is stabiized in the filament's interior. The ATP-DnaA-oriC complex binds and stabilizes one strand of the AT-rich DNA unwinding element (DUE), permitting loading of DNA polymerase. After initiation quickly degrades to an ADP-DnaA complex that is not apt for DNA replication. Binds acidic phospholipids. The protein is Chromosomal replication initiator protein DnaA of Salmonella dublin (strain CT_02021853).